The following is a 450-amino-acid chain: Phosphoglucosamine mutase (450 aa).

The Phosphoserine intermediate role is filled by S103. 4 residues coordinate Mg(2+): S103, D243, D245, and D247. S103 carries the post-translational modification Phosphoserine.

This sequence belongs to the phosphohexose mutase family. It depends on Mg(2+) as a cofactor. In terms of processing, activated by phosphorylation.

The catalysed reaction is alpha-D-glucosamine 1-phosphate = D-glucosamine 6-phosphate. In terms of biological role, catalyzes the conversion of glucosamine-6-phosphate to glucosamine-1-phosphate. This Latilactobacillus sakei subsp. sakei (strain 23K) (Lactobacillus sakei subsp. sakei) protein is Phosphoglucosamine mutase.